A 29-amino-acid chain; its full sequence is Beta-theraphotoxin-Gr1a (29 aa).

3 disulfides stabilise this stretch: cysteine 2–cysteine 16, cysteine 9–cysteine 21, and cysteine 15–cysteine 25.

This sequence belongs to the neurotoxin 30 (phrixotoxin) family. Expressed by the venom gland.

It localises to the secreted. Its function is as follows. Inhibits voltage-gated sodium channels Nav1.1/SCN1A (IC(50)=630 nM), Nav1.2/SCN2A (IC(50)=230 nM), Nav1.3/SCN3A (IC(50)=770 nM), Nav1.4/SCN4A (IC(50)=1290 nM), Nav1.6/SCN8A (IC(50)=630 nM), Nav1.7/SCN9A (IC(50)=15.3-1000 nM) and potassium channels Kv11.1/KCNH2 (IC(50)=4.2 uM). In Grammostola rosea (Chilean rose tarantula), this protein is Beta-theraphotoxin-Gr1a.